We begin with the raw amino-acid sequence, 575 residues long: Transmembrane protein 108 (575 aa).

Residues 9-29 (YCQLLSFLLILALTEALAFAI) form a helical membrane-spanning segment. The interaction with SH3GL2 stretch occupies residues 31-169 (EPSPRESLQV…TTTRRPPRPP (139 aa)). The segment at 65 to 398 (MLTPNPDGPP…PSRVSESTIS (334 aa)) is disordered. Residues 74–87 (PSQAAAPMATPTPR) are compositionally biased toward low complexity. Residues 95–115 (HTISTIAATVTAPHSESSLST) show a composition bias toward polar residues. The segment covering 146 to 160 (PPGATSRPTTAPPRT) has biased composition (low complexity). The tract at residues 173–407 (RKGAGNSSRP…SGAKEETVAT (235 aa)) is interaction with DST (isoform 1). Over residues 244–271 (YSSSPQPQTVAATTVPSNTSWAPTTTSL) the composition is skewed to polar residues. A compositionally biased stretch (low complexity) spans 290 to 318 (TFTSQGGTPDATAASGAPVSPQAAPVPSQ). Residues 329–352 (PSHSDSWLTVTPGTSRPLSTSSGV) are compositionally biased toward polar residues. Low complexity predominate over residues 353–366 (FTAATGPTPAAFDT). Residues 367 to 398 (SVSAPSQGIPQGASTTPQAPTHPSRVSESTIS) are compositionally biased toward polar residues. A helical membrane pass occupies residues 469–489 (IAWVILAISVPISSCSVLLTV). Residues 490–575 (CCMKRKKKTA…FVGNDQVSEI (86 aa)) form an interaction with CYFIP2 region.

Interacts with DST (isoform 1). Interacts with SH3GL2. Interacts (via N-terminus) with CYFIP1 and CYFIP2; the interactions associate TMEM108 with the WAVE1 complex. In terms of processing, glycosylated.

The protein localises to the membrane. The protein resides in the postsynaptic density. Its subcellular location is the endosome membrane. It is found in the cell projection. It localises to the axon. The protein localises to the dendrite. The protein resides in the early endosome. Functionally, transmembrane protein required for proper cognitive functions. Involved in the development of dentate gyrus (DG) neuron circuitry, is necessary for AMPA receptors surface expression and proper excitatory postsynaptic currents of DG granule neurons. Regulates the organization and stability of the microtubule network of sensory neurons to allow axonal transport. Through the interaction with DST, mediates the docking of the dynein/dynactin motor complex to vesicle cargos for retrograde axonal transport. In hippocampal neurons, required for BDNF-dependent dendrite outgrowth. Cooperates with SH3GL2 and recruits the WAVE1 complex to facilitate actin-dependent BDNF:NTRK2 early endocytic trafficking and mediate signaling from early endosomes. In Homo sapiens (Human), this protein is Transmembrane protein 108.